A 215-amino-acid polypeptide reads, in one-letter code: Protein-L-isoaspartate O-methyltransferase 1 (215 aa).

Residue Ser-61 is part of the active site.

The protein belongs to the methyltransferase superfamily. L-isoaspartyl/D-aspartyl protein methyltransferase family.

The protein localises to the cytoplasm. It carries out the reaction [protein]-L-isoaspartate + S-adenosyl-L-methionine = [protein]-L-isoaspartate alpha-methyl ester + S-adenosyl-L-homocysteine. Catalyzes the methyl esterification of L-isoaspartyl residues in peptides and proteins that result from spontaneous decomposition of normal L-aspartyl and L-asparaginyl residues. It plays a role in the repair and/or degradation of damaged proteins. The sequence is that of Protein-L-isoaspartate O-methyltransferase 1 from Pelobacter propionicus (strain DSM 2379 / NBRC 103807 / OttBd1).